Here is a 75-residue protein sequence, read N- to C-terminus: OcyC3 (75 aa).

An N-terminal signal peptide occupies residues 1–22; it reads MQYKTFLVISLAYLLVADEAAA. The propeptide occupies 51 to 75; sequence EINNVFEPYHENLDLELERFLSQLQ.

Expressed by the venom gland.

It is found in the secreted. The protein localises to the target cell membrane. In terms of biological role, amphipathic peptide with probable antimicrobial activity. May act by disrupting the integrity of the bacterial cell membrane. This is OcyC3 from Opisthacanthus cayaporum (South American scorpion).